The primary structure comprises 352 residues: Large ribosomal subunit protein uL5m (352 aa).

Residues 28 to 109 form a disordered region; it reads STQTGAGAAA…HPIQSPPSSD (82 aa). A compositionally biased stretch (basic and acidic residues) spans 63–80; it reads EEDKKEFRPWKRAADRKA.

Belongs to the universal ribosomal protein uL5 family. As to quaternary structure, component of the mitochondrial large ribosomal subunit (mt-LSU). Mature N.crassa 74S mitochondrial ribosomes consist of a small (37S) and a large (54S) subunit. The 37S small subunit contains a 16S ribosomal RNA (16S mt-rRNA) and 32 different proteins. The 54S large subunit contains a 23S rRNA (23S mt-rRNA) and 42 different proteins. Unlike bacterial L5, uL5m does not bind zinc.

Its subcellular location is the mitochondrion. Its function is as follows. Component of the mitochondrial ribosome (mitoribosome), a dedicated translation machinery responsible for the synthesis of mitochondrial genome-encoded proteins, including at least some of the essential transmembrane subunits of the mitochondrial respiratory chain. The mitoribosomes are attached to the mitochondrial inner membrane and translation products are cotranslationally integrated into the membrane. The polypeptide is Large ribosomal subunit protein uL5m (mrpl7) (Neurospora crassa (strain ATCC 24698 / 74-OR23-1A / CBS 708.71 / DSM 1257 / FGSC 987)).